A 138-amino-acid chain; its full sequence is Histone H2B.4 (138 aa).

Over residues 1-39 (MAPKAAEKKPAEKKPAGKAPAEKLPKAEKKISKDAGGSE) the composition is skewed to basic and acidic residues. Positions 1–48 (MAPKAAEKKPAEKKPAGKAPAEKLPKAEKKISKDAGGSEKKKKKSKKS) are disordered. At A2 the chain carries N,N,N-trimethylalanine; alternate. A N,N-dimethylalanine; alternate modification is found at A2. A2 bears the N-methylalanine; alternate mark. At K4 the chain carries N6-methyllysine. N6-acetyllysine occurs at positions 8 and 13. Residue K14 is modified to N6,N6-dimethyllysine. K18, K23, K29, and K30 each carry N6-acetyllysine. Residue K135 forms a Glycyl lysine isopeptide (Lys-Gly) (interchain with G-Cter in ubiquitin) linkage.

Belongs to the histone H2B family. As to quaternary structure, the nucleosome is a histone octamer containing two molecules each of H2A, H2B, H3 and H4 assembled in one H3-H4 heterotetramer and two H2A-H2B heterodimers. The octamer wraps approximately 147 bp of DNA. In terms of processing, can be acetylated to form H2BK6ac, H2BK33ac and H2BK34ac. Monoubiquitinated by BRE1 to form H2BK143ub1 and deubiquitinated by UBP26. Required for heterochromatic histone H3 di- and trimethylation at H3K4me. May give a specific tag for epigenetic transcriptional activation.

The protein resides in the nucleus. It localises to the chromosome. In terms of biological role, core component of nucleosome. Nucleosomes wrap and compact DNA into chromatin, limiting DNA accessibility to the cellular machineries which require DNA as a template. Histones thereby play a central role in transcription regulation, DNA repair, DNA replication and chromosomal stability. DNA accessibility is regulated via a complex set of post-translational modifications of histones, also called histone code, and nucleosome remodeling. The chain is Histone H2B.4 from Arabidopsis thaliana (Mouse-ear cress).